A 137-amino-acid polypeptide reads, in one-letter code: Large ribosomal subunit protein uL16 (137 aa).

This sequence belongs to the universal ribosomal protein uL16 family. In terms of assembly, part of the 50S ribosomal subunit.

Binds 23S rRNA and is also seen to make contacts with the A and possibly P site tRNAs. The protein is Large ribosomal subunit protein uL16 of Ruegeria sp. (strain TM1040) (Silicibacter sp.).